Consider the following 2290-residue polypeptide: Protein Ycf2 (2290 aa).

Residues 505 to 530 (GSNPTERSTRDQKSLKKQQDVSFVPP) form a disordered region. Positions 511-523 (RSTRDQKSLKKQQ) are enriched in basic and acidic residues. 1639 to 1646 (GSIGTGRS) contributes to the ATP binding site.

The protein belongs to the Ycf2 family.

The protein localises to the plastid. Its subcellular location is the chloroplast stroma. Probable ATPase of unknown function. Its presence in a non-photosynthetic plant (Epifagus virginiana) and experiments in tobacco indicate that it has an essential function which is probably not related to photosynthesis. The chain is Protein Ycf2 from Ceratophyllum demersum (Rigid hornwort).